The primary structure comprises 575 residues: DNA-directed RNA polymerase subunit beta' (575 aa).

Belongs to the RNA polymerase beta' chain family. As to quaternary structure, in plastids the minimal PEP RNA polymerase catalytic core is composed of four subunits: alpha, beta, beta', and beta''. When a (nuclear-encoded) sigma factor is associated with the core the holoenzyme is formed, which can initiate transcription.

Its subcellular location is the plastid. It localises to the apicoplast. It carries out the reaction RNA(n) + a ribonucleoside 5'-triphosphate = RNA(n+1) + diphosphate. Functionally, DNA-dependent RNA polymerase catalyzes the transcription of DNA into RNA using the four ribonucleoside triphosphates as substrates. This Plasmodium falciparum (isolate 3D7) protein is DNA-directed RNA polymerase subunit beta' (rpoC1).